The following is a 123-amino-acid chain: Large ribosomal subunit protein eL8 (123 aa).

Belongs to the eukaryotic ribosomal protein eL8 family. In terms of assembly, part of the 50S ribosomal subunit. Probably part of the RNase P complex.

The protein localises to the cytoplasm. In terms of biological role, multifunctional RNA-binding protein that recognizes the K-turn motif in ribosomal RNA, the RNA component of RNase P, box H/ACA, box C/D and box C'/D' sRNAs. The protein is Large ribosomal subunit protein eL8 of Methanopyrus kandleri (strain AV19 / DSM 6324 / JCM 9639 / NBRC 100938).